Here is a 289-residue protein sequence, read N- to C-terminus: DegV domain-containing protein YteA (289 aa).

Residues 3–284 form the DegV domain; that stretch reads FQIMTDSTAD…DGTIAIFSIS (282 aa). The hexadecanoate site is built by Thr62 and Ser94.

May bind long-chain fatty acids, such as palmitate, and may play a role in lipid transport or fatty acid metabolism. The chain is DegV domain-containing protein YteA (yteA) from Lactococcus lactis subsp. lactis (strain IL1403) (Streptococcus lactis).